The following is a 105-amino-acid chain: uncharacterized protein (105 aa).

It belongs to the EspC family.

Its function is as follows. May be involved in assembly of the ESX-1 / type VII specialized secretion system (T7SS), which exports several proteins including EsxA and EsxB. Involved in DNA conjugation, in at least recipient strain. This is an uncharacterized protein from Mycolicibacterium smegmatis (strain MKD8) (Mycobacterium smegmatis).